The primary structure comprises 456 residues: Neurexin-3-beta (456 aa).

A signal peptide spans 1-35 (MHLRIHARRNPPRRPAWTLGIWSLFWGCIVSSVWS). At 36 to 381 (SSNVASSSSS…EVIRESSSTT (346 aa)) the chain is on the extracellular side. The interval 41 to 63 (SSSSSPGSHSQHEHHFHGSKHHS) is disordered. Positions 52–63 (HEHHFHGSKHHS) are enriched in basic residues. A Laminin G-like domain is found at 82–282 (ATYIFGKSGG…NPNIKINGSV (201 aa)). The Ca(2+) site is built by aspartate 134 and isoleucine 151. Asparagine 181 carries an N-linked (GlcNAc...) asparagine glycan. Ca(2+)-binding residues include isoleucine 233 and asparagine 235. 2 N-linked (GlcNAc...) asparagine glycosylation sites follow: asparagine 279 and asparagine 323. Positions 316-340 (ATTTTRKNRSTASIQPTSDDLVSSA) are disordered. A compositionally biased stretch (polar residues) spans 325-340 (STASIQPTSDDLVSSA). Serine 339 carries an O-linked (Xyl...) (heparan sulfate) serine glycan. The chain crosses the membrane as a helical span at residues 382-402 (GMVVGIVAAAALCILILLYAM). Residues 403–456 (YKYRNRDEGSYQVDETRNYISNSAQSNGTLLKEKPPSSKGGHKKQKNKDKEYYV) are Cytoplasmic-facing. The interval 424–456 (NSAQSNGTLLKEKPPSSKGGHKKQKNKDKEYYV) is disordered.

This sequence belongs to the neurexin family. Weakly interacts with CBLN1 and CBLN2. Very weak binding, if any, to CBLN4. Specific isoforms bind neuroligins NLGN1, NLGN2 and NLGN3. Interacts with CLSTN3. In terms of processing, processed by alpha-secretase leading to the formation of an extracellular soluble protein as well as a C-terminal membrane-embedded fragment (CTF). Proteolysis of these CTFs by gamma-secretase releases intracellular domains (ICDs) and extracellular peptides. Post-translationally, O-glycosylated; contains heparan sulfate. Heparan sulfate attachment is required for synapse development by mediating interactions with neuroligins.

The protein resides in the presynaptic cell membrane. It is found in the secreted. Its function is as follows. Neuronal cell surface protein that may be involved in cell recognition and cell adhesion. May mediate intracellular signaling. Functions as part of a trans-synaptic complex by binding to cerebellins and postsynaptic GRID1. This interaction helps regulate the activity of NMDA and AMPA receptors at hippocampal synapses without affecting synapse formation. NRXN3B-CBLN2-GRID1 complex transduce presynaptic signals into postsynaptic AMPAR response. This Bos taurus (Bovine) protein is Neurexin-3-beta (NRXN3).